Reading from the N-terminus, the 352-residue chain is PDZ and LIM domain protein 2 (352 aa).

The region spanning 1 to 84 is the PDZ domain; the sequence is MALTVDVAGP…PLRLQLDRSQ (84 aa). Disordered regions lie at residues 69–95 and 108–141; these read IRQS…NGDS and VRTH…PPPF. The segment covering 81–95 has biased composition (polar residues); that stretch reads DRSQAASPGQTNGDS. A compositionally biased stretch (low complexity) spans 117 to 135; the sequence is SLRSSYSSPTSLSPRAGSP. Phosphoserine is present on S124. At T126 the chain carries Phosphothreonine. 10 positions are modified to phosphoserine: S127, S129, S134, S137, S143, S161, S197, S203, S213, and S266. 2 disordered regions span residues 170-214 and 253-275; these read LSYS…GGSL and ERGG…PASR. Residues 258–275 show a composition bias toward low complexity; that stretch reads PAFLPSSLSPQSSLPASR. The region spanning 284–344 is the LIM zinc-binding domain; sequence HTCEKCSTSI…EKHARQRYSA (61 aa).

Interacts with alpha-actinins ACTN1 and ACTN4, FLNA and MYH9. Interacts (via LIM zinc-binding domain) with MKRN2.

It is found in the cytoplasm. The protein localises to the cytoskeleton. In terms of biological role, probable adapter protein located at the actin cytoskeleton that promotes cell attachment. Necessary for the migratory capacity of epithelial cells. Overexpression enhances cell adhesion to collagen and fibronectin and suppresses anchorage independent growth. May contribute to tumor cell migratory capacity. The protein is PDZ and LIM domain protein 2 (PDLIM2) of Macaca fascicularis (Crab-eating macaque).